The sequence spans 261 residues: Cytochrome c oxidase subunit 3 (261 aa).

The Mitochondrial matrix segment spans residues 1 to 15; sequence MTHQTHAYHMVNPSP. A helical transmembrane segment spans residues 16–34; that stretch reads WPLTGALSALLMTSGLIMW. Residues 35–40 are Mitochondrial intermembrane-facing; that stretch reads FHFNSV. Residues 41 to 66 form a helical membrane-spanning segment; sequence ALLTLGLTTNMLTMYQWWRDVIREST. Residues 67-72 are Mitochondrial matrix-facing; sequence FQGHHT. Residues 73–105 form a helical membrane-spanning segment; the sequence is PNVQKGLRYGMILFIISEVLFFTGFFWAFYHSS. Residues 106–128 lie on the Mitochondrial intermembrane side of the membrane; it reads LAPTPELGGCWPPTGIHPLNPLE. Residues 129–152 traverse the membrane as a helical segment; it reads VPLLNTSVLLASGVSITWAHHSLM. The Mitochondrial matrix segment spans residues 153–155; sequence EGN. Residues 156-183 traverse the membrane as a helical segment; it reads RNHMLQALFITIALGVYFTLLQASEYYE. Residues 184–190 are Mitochondrial intermembrane-facing; sequence APFTISD. The helical transmembrane segment at 191 to 223 threads the bilayer; sequence GVYGSTFFVATGFHGLHVIIGSTFLIVCFFRQL. Over 224-232 the chain is Mitochondrial matrix; the sequence is KFHFTSSHH. A helical membrane pass occupies residues 233–256; the sequence is FGFEAAAWYWHFVDVVWLFLYVSI. Over 257–261 the chain is Mitochondrial intermembrane; it reads YWWGS.

This sequence belongs to the cytochrome c oxidase subunit 3 family. Component of the cytochrome c oxidase (complex IV, CIV), a multisubunit enzyme composed of 14 subunits. The complex is composed of a catalytic core of 3 subunits MT-CO1, MT-CO2 and MT-CO3, encoded in the mitochondrial DNA, and 11 supernumerary subunits COX4I, COX5A, COX5B, COX6A, COX6B, COX6C, COX7A, COX7B, COX7C, COX8 and NDUFA4, which are encoded in the nuclear genome. The complex exists as a monomer or a dimer and forms supercomplexes (SCs) in the inner mitochondrial membrane with NADH-ubiquinone oxidoreductase (complex I, CI) and ubiquinol-cytochrome c oxidoreductase (cytochrome b-c1 complex, complex III, CIII), resulting in different assemblies (supercomplex SCI(1)III(2)IV(1) and megacomplex MCI(2)III(2)IV(2)).

The protein localises to the mitochondrion inner membrane. The enzyme catalyses 4 Fe(II)-[cytochrome c] + O2 + 8 H(+)(in) = 4 Fe(III)-[cytochrome c] + 2 H2O + 4 H(+)(out). Its function is as follows. Component of the cytochrome c oxidase, the last enzyme in the mitochondrial electron transport chain which drives oxidative phosphorylation. The respiratory chain contains 3 multisubunit complexes succinate dehydrogenase (complex II, CII), ubiquinol-cytochrome c oxidoreductase (cytochrome b-c1 complex, complex III, CIII) and cytochrome c oxidase (complex IV, CIV), that cooperate to transfer electrons derived from NADH and succinate to molecular oxygen, creating an electrochemical gradient over the inner membrane that drives transmembrane transport and the ATP synthase. Cytochrome c oxidase is the component of the respiratory chain that catalyzes the reduction of oxygen to water. Electrons originating from reduced cytochrome c in the intermembrane space (IMS) are transferred via the dinuclear copper A center (CU(A)) of subunit 2 and heme A of subunit 1 to the active site in subunit 1, a binuclear center (BNC) formed by heme A3 and copper B (CU(B)). The BNC reduces molecular oxygen to 2 water molecules using 4 electrons from cytochrome c in the IMS and 4 protons from the mitochondrial matrix. This is Cytochrome c oxidase subunit 3 (MT-CO3) from Nanger dama (Dama gazelle).